A 199-amino-acid chain; its full sequence is Large ribosomal subunit protein uL4 (199 aa).

Belongs to the universal ribosomal protein uL4 family. Part of the 50S ribosomal subunit.

One of the primary rRNA binding proteins, this protein initially binds near the 5'-end of the 23S rRNA. It is important during the early stages of 50S assembly. It makes multiple contacts with different domains of the 23S rRNA in the assembled 50S subunit and ribosome. Functionally, forms part of the polypeptide exit tunnel. This is Large ribosomal subunit protein uL4 from Aquifex pyrophilus.